Here is a 179-residue protein sequence, read N- to C-terminus: DELTA-actitoxin-Afr1a (179 aa).

Residues 1 to 29 (SADVAGAVIDGAGLGFDVLKTVLEALGNV) are N-terminal alpha-helix that contributes to the pore. Residue Arg-31 coordinates an N-(acyl)-sphingosylphosphocholine. N-acetyl-D-glucosamine 6-sulfate contacts are provided by Tyr-51 and Arg-53. Positions 53, 54, 79, 85, 108, 113, 114, 116, 133, 137, 138, 144, and 168 each coordinate an N-(acyl)-sphingosylphosphocholine. Residues 105 to 120 (SVPYDYNWYSNWWNVR) are trp-rich region, which is important for the binding to lipid membrane. Tyr-138 is an N-acetyl-D-glucosamine 6-sulfate binding site. Residues 144 to 146 (RGD) carry the Cell attachment site, crucial for protein stability motif.

This sequence belongs to the actinoporin family. Sea anemone subfamily. Octamer or nonamer in membranes. Monomer in the soluble state.

The protein localises to the secreted. Its subcellular location is the nematocyst. It localises to the target cell membrane. Functionally, pore-forming toxin (PFT) that consists of a crown-shaped octamer or nonamer that forms cation-selective hydrophilic pores of about 1.5 nm (inside) and 13 nm (outside). It causes cardiac stimulation and cytolysis (EC(50)=1.6 nM on erythrocytes). Interestingly, the Phe-16 is crucial for hemolysis. Pore formation is a multi-step process that involves specific recognition of membrane sphingomyelin (but neither cholesterol nor phosphatidylcholine) using aromatic rich region and adjacent phosphocholine (POC) binding site, firm binding to the membrane (mainly driven by hydrophobic interactions) accompanied by the transfer of the N-terminal region to the lipid-water interface and finally pore formation after oligomerization of monomers. It is probable that a dimeric form is an assembly intermediate before the complete oligomerization. The formation of stable pores occurs only in vesicles composed of DOPC/SM (there is no oligomerization when the PFT is treated with vesicles of DOPC or SM alone). The transmembrane pore displays 8 lateral perforations, one at each subunit-subunit interface, partially occupied by the acyl-chain region of a bridging lipid. Each pore contains 24 lipid molecules, firmly bound to each subunit, that is, 3 lipids (L1, L2, L3, L4 and/or L5) are associated to each subunit. Lipid L1 bridges 2 subunits, whereas lipids L2 and L3 bind to sites at single subunit. The protein is DELTA-actitoxin-Afr1a of Actinia fragacea (Strawberry anemone).